Reading from the N-terminus, the 152-residue chain is Cytochrome c-type biogenesis protein CcmE (152 aa).

The Cytoplasmic segment spans residues 1-8 (MQARRKTR). A helical; Signal-anchor for type II membrane protein membrane pass occupies residues 9 to 29 (LYIVLAVLAGLGLTVSLTLYA). At 30 to 152 (LSSNIDLFYT…MTPEKTGAQP (123 aa)) the chain is on the periplasmic side. Heme-binding residues include H130 and Y134. The segment at 133 to 152 (NYTPPEVKNAMTPEKTGAQP) is disordered.

The protein belongs to the CcmE/CycJ family.

The protein resides in the cell inner membrane. Its function is as follows. Heme chaperone required for the biogenesis of c-type cytochromes. Transiently binds heme delivered by CcmC and transfers the heme to apo-cytochromes in a process facilitated by CcmF and CcmH. This is Cytochrome c-type biogenesis protein CcmE from Klebsiella pneumoniae (strain 342).